A 2065-amino-acid polypeptide reads, in one-letter code: MEWLAPALERDLGIDQRQTAHSQRPNELVVLVPTRWVMALRNKRVTRCAKYESFSEGEICTLLQRSQMKLPSGWTRVCIQGLRKRKLGYRFARETGCHGEGLSQDSFMTLMQGVSQSNFRNLWHEAYMTHVQPYADSVEQTPVLALDAVRQALQKLFCSNFISTDRVSPSLSPAKEKEKDCPFLSTCSAPKQSTESLCPNVLPAECLLESEEVLYVVFPYTQYTVHDIVTYSPAKLANSNAKILFILYQLLIAMRECHASGLLCGELSLLDIAVDEQLCSRLKISLAHYEKFKEYRDAVPYALQNKVPMSVSTKDNHNNGVSGQLCRNCQDELKSLVLDWVNGQVSNFQYLMELNRLAGRREGDPNYHPVLPWVVDFTVPYGRFRDLKKSKFRLNKGDKQLDFTYEMTKEALAAVSGSGGSNYPPDLGGPVVPGGPGQSDHLHVPHHISDVLSDITYYVYKARQTPKSVLCSHVRSQWEPNEYPASMERIQSWTPDECIPEFYRDPSIFRSIHPDMPDLDVPPWCNSYEEFIAVHRQLLESREVSQQLHHWIDLTFGYKLSGKEAIKAKNVCLHLVDNHTHLTSYGVVQLFDHPHPPRLALYQYAPPEPPHFGRVNVTTWQIPPLETTMDGVDGLVPEATGCESSGWSVVGRDEELEQAIEALDLSGSSSSTSASVSIPVVGSAAGKTSGETIGLVVSPSHGSFPGEATGNVTNTLGSGIRTAMLHRAASVSKKPEASNLEDFKISLPDGFKPLQPLEELEKLNTFLVKGLHSEIEHTMDLGINKKDLRSVPKVPLSFTDLFQRDMQALGVLIAEIFYSSKLRGLRPETHLRDRFQAVLKLCSTNLRDVPLPLHHALDTLLQVHKHCLKTETIIMHPQGLPFLFKYDPICEGLPPPNPWQLLSPIVSPLPFPEYFPTLHKFIFSYHSKMESINNIQGRDIVFNLWQQLETLLKGDITTEGLEILLPFVLSLMSEESTAVYAAWYLFEPVSRVLGPRNASKYLIKPLVGVYENPRCLRGRFYLYTDCFVLQLIVRLGLQVFLSSLLPHVLQVMTGFESCNTAAGTEWEGMKVLRGAAGALDEEEEEYECDDRRSSNATSSGKVGGGSGGGSGGVGVVGDQGLVDYSSGISLNDQVFLNEGEDFQNGFYVNNSASGATTVGTKQQNQSTANKDQDQESLSVGKLSDKSSASEVSIGDRASLKSADSSQDLKQASDGEDGGELEDEEETVEDREITVQRVPSLEMTLSVCTEESEATVATLEGDVMNGIVQEDGEKNMEEEETEHDPLEDSEEKEHKILLDTVCKTVRWLSAKLGPTLTSRFIARNLLRLLTSCYIGLDKHQFMLSVNEENSLECVGSVYEKKPVVGDQTARPVLECLIYIAHLYGEPVLTYQYLPYIGYLVSPPSSCRLNTRKEAGLLGAVVLTQKIIVFLSDTTLMDMLMKINQEVLLPLLDLLTSTKMGFPSGVQTRSAVCLKTLSLMALICLRIGREMVQQHMAETLSRFFQVFSLLQFLQNQIGSAPRREVAECTYLDLRIPDGAELTIELGVLEELQAVFNPEMAYASYIPFYCLIGDSGIRKLVTNHELVWSLAQSYHERASPGSPESNPVGGQRASAVGLSPSMGRQMSRSPFPAPSSTSTPLGGDILPESGTFGSHLVGNRIQVTRDTEACGSPNLSSLETWTHGRPYGSNAPPMSLATTALSSAGPSFSHSSYSWVMGPTPEDSALKQDLPRSSRSLQGNWLAYWQYEIGLNQQDSHFHFHQIRLQSFIGHSGTAKCLAPLAGEDYFLSGSKDKTVRLWPLYNHGDGTREVEPRLTYTEHRKSIFYVGQLEALQEVVSCDGTVHLWDQFTGKNIRCNEPLDGKNPITAVTTMPAPHCSVVFASADSVLRFIDPRKPGLQHEFRLAYSNLSAGLIRCLAVSPGGRTIAAGFSTGFIVLLDARTGLVLRGWPGHEGDILQMKAAEGNLLVSSSSDHTLTVWKDVEHKPLHQYRTPSDPIHAFDLYGAEIVAGTVANKIGVYSILDSTASLAGSTKLSTENFRGTLTSLSVLPTKRLLLLGSDNGAIRLLA.

Positions 325–617 (LCRNCQDELK…EPPHFGRVNV (293 aa)) constitute a BEACH domain. Disordered stretches follow at residues 1082–1111 (EEEE…GGSG), 1156–1230 (TTVG…VEDR), 1271–1290 (GEKN…DSEE), and 1595–1642 (ASPG…GGDI). Gly residues predominate over residues 1101 to 1111 (KVGGGSGGGSG). The segment covering 1156–1169 (TTVGTKQQNQSTAN) has biased composition (polar residues). Over residues 1213–1228 (DGEDGGELEDEEETVE) the composition is skewed to acidic residues. A compositionally biased stretch (low complexity) spans 1624–1637 (SRSPFPAPSSTSTP). WD repeat units lie at residues 1767-1806 (GHSG…DGTR), 1813-1853 (TYTE…NIRC), 1906-1945 (LSAG…VLRG), 1948-1986 (GHEG…PLHQ), and 2035-2065 (NFRG…RLLA).

The protein belongs to the WD repeat WDR81 family. Widely expressed.

The protein localises to the early endosome membrane. Its subcellular location is the late endosome membrane. The protein resides in the lysosome membrane. It localises to the cytoplasmic vesicle. It is found in the autophagosome membrane. The protein localises to the mitochondrion. Its subcellular location is the cytoplasm. The protein resides in the cytosol. In terms of biological role, functions as a negative regulator of the PI3 kinase/PI3K activity associated with endosomal membranes. By modifying the phosphatidylinositol 3-phosphate/PtdInsP3 content of endosomal membranes may regulate endosome fusion, recycling, sorting and early to late endosome transport. May also play a role in aggrephagy, the macroautophagic degradation of ubiquitinated protein aggregates. May also be involved in maintenance of normal mitochondrial structure and organization. This Danio rerio (Zebrafish) protein is WD repeat-containing protein 81 (wdr81).